The chain runs to 518 residues: Glutamate--cysteine ligase (518 aa).

This sequence belongs to the glutamate--cysteine ligase type 1 family. Type 1 subfamily.

The catalysed reaction is L-cysteine + L-glutamate + ATP = gamma-L-glutamyl-L-cysteine + ADP + phosphate + H(+). It participates in sulfur metabolism; glutathione biosynthesis; glutathione from L-cysteine and L-glutamate: step 1/2. The protein is Glutamate--cysteine ligase of Escherichia coli O139:H28 (strain E24377A / ETEC).